The primary structure comprises 126 residues: UPF0102 protein gll3754 (126 aa).

It belongs to the UPF0102 family.

This Gloeobacter violaceus (strain ATCC 29082 / PCC 7421) protein is UPF0102 protein gll3754.